The following is a 101-amino-acid chain: Small ribosomal subunit protein uS14 (101 aa).

This sequence belongs to the universal ribosomal protein uS14 family. As to quaternary structure, part of the 30S ribosomal subunit. Contacts proteins S3 and S10.

In terms of biological role, binds 16S rRNA, required for the assembly of 30S particles and may also be responsible for determining the conformation of the 16S rRNA at the A site. The sequence is that of Small ribosomal subunit protein uS14 from Paraburkholderia phytofirmans (strain DSM 17436 / LMG 22146 / PsJN) (Burkholderia phytofirmans).